Here is a 557-residue protein sequence, read N- to C-terminus: Selenoprotein N (557 aa).

Basic and acidic residues predominate over residues 1–21 (MAADVDKTPAGEQKDDHEDRG). The disordered stretch occupies residues 1–28 (MAADVDKTPAGEQKDDHEDRGTPSSRRG). The helical transmembrane segment at 35–55 (ISSLFIIAAIPVIGVCIKYYL) threads the bilayer. Sec430 is a non-standard amino acid (selenocysteine). Residues Asn451 and Asn499 are each glycosylated (N-linked (GlcNAc...) asparagine).

Interacts with ryr3.

The protein resides in the endoplasmic reticulum membrane. In terms of biological role, plays an important role in cell protection against oxidative stress and in the regulation of redox-related calcium homeostasis. Regulates the calcium level of the ER by protecting the calcium pump ATP2A2 against the oxidoreductase ERO1A-mediated oxidative damage. Acts as a modulator of ryanodine receptor (RyR) activity: protects RyR from oxidation due to increased oxidative stress, or directly controls the RyR redox state, regulating the RyR-mediated calcium mobilization required for normal muscle development and differentiation. Plays an important role in muscle development and differentiation during early development. Required for development of the slow muscle fiber lineage. Required for the correct organization and attachment of the myofibrils, as well as for the continuity and integrity of the connective tissue that forms the myoseptum. This chain is Selenoprotein N, found in Danio rerio (Zebrafish).